Consider the following 576-residue polypeptide: MSDKKSLMPLVGIPGEIKNRLNILDFVKNDKFFTLYVRALQVLQARDQSDYSSFFQLGGIHGLPYTEWAKAQPQLHLYKANYCTHGTVLFPTWHRAYESTWEQTLWEAAGTVAQRFTTSDQAEWIQAAKDLRQPFWDWGYWPNDPDFIGLPDQVIRDKQVEITDYNGTKIEVENPILHYKFHPIEPTFEGDFAQWQTTMRYPDVQKQENIEGMIAGIKAAAPGFREWTFNMLTKNYTWELFSNHGAVVGAHANSLEMVHNTVHFLIGRDPTLDPLVPGHMGSVPHAAFDPIFWMHHCNVDRLLALWQTMNYDVYVSEGMNREATMGLIPGQVLTEDSPLEPFYTKNQDPWQSDDLEDWETLGFSYPDFDPVKGKSKEEKSVYINDWVHKHYGFVTTQTENPALRLLSSFQRAKSDHETQYALYDWVIHATFRYYELNNSFSIIFYFDEGEGCTLESIIGTVDAFRGTTSENCANCARSQDLIAEGFVHLNYYIGCDIGQHADHEDDAVPLYEPTRVKEYLKKRKIGCKVVSAEGELTSLVVEIKGAPYYLPVGEARPKLDHEKPIVILDDIIHRVN.

Positions 61, 85, 94, 259, 263, and 296 each coordinate Cu cation. Positions 83 to 85 form a cross-link, 2'-(S-cysteinyl)-histidine (Cys-His); that stretch reads CTH. A substrate-binding site is contributed by His263. Positions 393–576 are cleaved as a propeptide — removed in mature form; sequence FVTTQTENPA…ILDDIIHRVN (184 aa).

This sequence belongs to the tyrosinase family. In terms of assembly, tetramer composed of two subunits of PPO3 (H subunits) and two subunits of the as yet uncharacterized product of ORF239342 (L subunits). Cu(2+) is required as a cofactor. Post-translationally, the C-ter is probably cleaved after Gly-392 since the mature active protein is smaller than the protein encoded by the gene.

The catalysed reaction is 2 L-dopa + O2 = 2 L-dopaquinone + 2 H2O. The enzyme catalyses L-tyrosine + O2 = L-dopaquinone + H2O. Functionally, copper-containing oxidase that catalyzes both the o-hydroxylation of monophenols and the subsequent oxidation of the resulting o-diphenols into reactive o-quinones, which evolve spontaneously to produce intermediates, which associate in dark brown pigments. Involved in the initial step of melanin synthesis. Melanins constitute a mechanism of defense and resistance to stress such as UV radiations, free radicals, gamma rays, dehydratation and extreme temperatures, and contribute to the fungal cell-wall resistance against hydrolytic enzymes in avoiding cellular lysis. Fungal pigments are also involved in the formation and stability of spores. The protein is Polyphenol oxidase 3 (PPO3) of Agaricus bisporus (White button mushroom).